The primary structure comprises 221 residues: 7-cyano-7-deazaguanine synthase (221 aa).

10–20 (FSGGQDSTTCL) contributes to the ATP binding site. Residues C186, C195, C198, and C201 each contribute to the Zn(2+) site.

This sequence belongs to the QueC family. As to quaternary structure, homodimer. It depends on Zn(2+) as a cofactor.

The catalysed reaction is 7-carboxy-7-deazaguanine + NH4(+) + ATP = 7-cyano-7-deazaguanine + ADP + phosphate + H2O + H(+). The protein operates within purine metabolism; 7-cyano-7-deazaguanine biosynthesis. Functionally, catalyzes the ATP-dependent conversion of 7-carboxy-7-deazaguanine (CDG) to 7-cyano-7-deazaguanine (preQ(0)). This chain is 7-cyano-7-deazaguanine synthase, found in Geobacillus sp. (strain WCH70).